A 267-amino-acid chain; its full sequence is Eukaryotic translation initiation factor 3 subunit K (267 aa).

Residues 46–233 (FDCYANLALL…EARSEVKSER (188 aa)) form the PCI domain.

The protein belongs to the eIF-3 subunit K family. In terms of assembly, component of the eukaryotic translation initiation factor 3 (eIF-3) complex.

Its subcellular location is the cytoplasm. Its function is as follows. Component of the eukaryotic translation initiation factor 3 (eIF-3) complex, which is involved in protein synthesis of a specialized repertoire of mRNAs and, together with other initiation factors, stimulates binding of mRNA and methionyl-tRNAi to the 40S ribosome. The eIF-3 complex specifically targets and initiates translation of a subset of mRNAs involved in cell proliferation. This is Eukaryotic translation initiation factor 3 subunit K from Aspergillus niger (strain ATCC MYA-4892 / CBS 513.88 / FGSC A1513).